Consider the following 357-residue polypeptide: UPF0283 membrane protein BMEI0952 (357 aa).

A disordered region spans residues Met-1 to Lys-36. Residues Glu-27 to Lys-36 show a composition bias toward basic and acidic residues. 2 consecutive transmembrane segments (helical) span residues Ile-78 to Leu-98 and Leu-109 to Leu-129.

This sequence belongs to the UPF0283 family.

It localises to the cell inner membrane. This Brucella melitensis biotype 1 (strain ATCC 23456 / CCUG 17765 / NCTC 10094 / 16M) protein is UPF0283 membrane protein BMEI0952.